The chain runs to 666 residues: Calmodulin-binding receptor kinase CaMRLK (666 aa).

The N-terminal stretch at 1–17 is a signal peptide; that stretch reads MFLKLFLLLSLVSFSHS. At 18–297 the chain is on the extracellular side; the sequence is DSSSTVSCPN…KTHRTNHTPL (280 aa). Residues Asn27, Asn45, Asn52, Asn68, Asn78, Asn89, Asn110, Asn126, Asn137, Asn148, Asn154, Asn189, Asn212, Asn229, and Asn261 are each glycosylated (N-linked (GlcNAc...) asparagine). LRR repeat units follow at residues 79–103, 105–127, 130–152, 153–177, 178–197, 198–224, and 226–246; these read LTRLRVLDLSNNSLDGSLPTWLWSM, GLVSVNLSRNRFGGSIRVIPVNG, LSAVKELNLSFNRFKHAVNFTGF, TNLTTLDLSHNSLGVLPLGLGSLSG, LRHLDISRCKINGSVKPISG, LKSLDYLDLSENSMNGSFPVDFPNLNH, and QFLNLSANRFSGSVGFDKYRK. A helical membrane pass occupies residues 298–318; the sequence is VIGLSSSLGALIIVIFAAAII. Residues 319–337 are calmodulin binding; that stretch reads LIRRRMKSARTKSRWAISN. Residues 319–666 lie on the Cytoplasmic side of the membrane; sequence LIRRRMKSAR…LLKDIRTVSR (348 aa). Residues 395–661 enclose the Protein kinase domain; it reads FGTESVISDG…QQVLGLLKDI (267 aa). ATP contacts are provided by residues 401-409 and Lys423; that span reads ISDGTCGPL.

The protein belongs to the protein kinase superfamily. Ser/Thr protein kinase family. As to quaternary structure, binds calmodulin (CaM) in a calcium-dependent manner. Interacts with CAM1, but not with CAM8. It depends on Mn(2+) as a cofactor. The cofactor is Mg(2+). Post-translationally, calmodulin (CaM)-independent autophosphorylation. In terms of tissue distribution, expressed in reproductive and vegetative tissues, with higher levels in seedlings and flowers, but not in leaves.

The protein localises to the cell membrane. The enzyme catalyses L-seryl-[protein] + ATP = O-phospho-L-seryl-[protein] + ADP + H(+). It carries out the reaction L-threonyl-[protein] + ATP = O-phospho-L-threonyl-[protein] + ADP + H(+). With respect to regulation, not stimulated by calmodulin (CaM). In terms of biological role, can phosphorylate the myelin basic protein in vitro. Required for endosperm development in embryos. Maybe involved in auxin and osmotic stress responses. The chain is Calmodulin-binding receptor kinase CaMRLK from Arabidopsis thaliana (Mouse-ear cress).